A 473-amino-acid polypeptide reads, in one-letter code: Dolichyl-diphosphooligosaccharide--protein glycosyltransferase subunit 1B (473 aa).

The signal sequence occupies residues 1 to 27; the sequence is MAPSLSTAVSSLLLLLLLAAAISVSSS. At 28 to 439 the chain is on the lumenal side; that stretch reads PPMPEDSIRV…PFQVYYEFNP (412 aa). N-linked (GlcNAc...) asparagine glycosylation is found at N307 and N361. The helical transmembrane segment at 440 to 460 threads the bilayer; the sequence is IFMLAEPLMLISAVFLFFVAC. The Cytoplasmic segment spans residues 461 to 473; that stretch reads IAYLHMDLSIGKS.

Belongs to the OST1 family. In terms of assembly, component of the oligosaccharyltransferase (OST) complex.

Its subcellular location is the endoplasmic reticulum membrane. Its pathway is protein modification; protein glycosylation. Functionally, subunit of the oligosaccharyl transferase (OST) complex that catalyzes the initial transfer of a defined glycan (Glc(3)Man(9)GlcNAc(2) in eukaryotes) from the lipid carrier dolichol-pyrophosphate to an asparagine residue within an Asn-X-Ser/Thr consensus motif in nascent polypeptide chains, the first step in protein N-glycosylation. N-glycosylation occurs cotranslationally and the complex associates with the Sec61 complex at the channel-forming translocon complex that mediates protein translocation across the endoplasmic reticulum (ER). All subunits are required for a maximal enzyme activity. In Oryza sativa subsp. japonica (Rice), this protein is Dolichyl-diphosphooligosaccharide--protein glycosyltransferase subunit 1B (OST1B).